A 269-amino-acid chain; its full sequence is Staphylococcal secretory antigen ssaA2 (269 aa).

Positions Met1 to Ala27 are cleaved as a signal peptide. A run of 7 repeats spans residues Tyr83 to Asn85, Tyr88 to Asn90, Tyr91 to Asn93, Tyr97 to Asn99, Tyr103 to Asn105, Tyr106 to Asn108, and Tyr115 to Asn117. The tract at residues Tyr83–Tyr115 is 7 X 3 AA repeats of Y-[NS]-N. The Peptidase C51 domain occupies Met148 to His269.

The protein resides in the secreted. In terms of biological role, not known; immunogenic protein. This is Staphylococcal secretory antigen ssaA2 (ssaA2) from Staphylococcus aureus (strain MRSA252).